Here is a 113-residue protein sequence, read N- to C-terminus: MSEIKTEELACIYSGLLLQDDGIEITADKIKTLLEAANITVASHWPGLYARSLAKVNIPELLLNAGSSGAAGAAPVAAATSAAAPAAAAKKETKKEEVKKEESDDDMGMGLFD.

Residues 84–113 (APAAAAKKETKKEEVKKEESDDDMGMGLFD) are disordered. Over residues 89 to 102 (AKKETKKEEVKKEE) the composition is skewed to basic and acidic residues.

It belongs to the eukaryotic ribosomal protein P1/P2 family. P1 and P2 exist as dimers at the large ribosomal subunit.

In terms of biological role, plays an important role in the elongation step of protein synthesis. In Dictyostelium discoideum (Social amoeba), this protein is Large ribosomal subunit protein P1 (rplp1).